A 630-amino-acid chain; its full sequence is Protein mono-ADP-ribosyltransferase PARP6 (630 aa).

Residue cysteine 237 is modified to ADP-ribosylcysteine. In terms of domain architecture, PARP catalytic spans 394–620 (EMTQGSYLEI…QDPKIQKEIM (227 aa)). An ADP-ribosyl aspartic acid modification is found at aspartate 600.

It belongs to the ARTD/PARP family. In terms of processing, auto-mono-ADP-ribosylated.

It carries out the reaction L-aspartyl-[protein] + NAD(+) = 4-O-(ADP-D-ribosyl)-L-aspartyl-[protein] + nicotinamide. The enzyme catalyses L-cysteinyl-[protein] + NAD(+) = S-(ADP-D-ribosyl)-L-cysteinyl-[protein] + nicotinamide + H(+). Functionally, mono-ADP-ribosyltransferase that mediates mono-ADP-ribosylation of target proteins. This Mus musculus (Mouse) protein is Protein mono-ADP-ribosyltransferase PARP6.